Consider the following 513-residue polypeptide: ATP synthase subunit alpha (513 aa).

Position 169–176 (169–176) interacts with ATP; the sequence is GDRQTGKT.

The protein belongs to the ATPase alpha/beta chains family. F-type ATPases have 2 components, CF(1) - the catalytic core - and CF(0) - the membrane proton channel. CF(1) has five subunits: alpha(3), beta(3), gamma(1), delta(1), epsilon(1). CF(0) has three main subunits: a(1), b(2) and c(9-12). The alpha and beta chains form an alternating ring which encloses part of the gamma chain. CF(1) is attached to CF(0) by a central stalk formed by the gamma and epsilon chains, while a peripheral stalk is formed by the delta and b chains.

The protein resides in the cell inner membrane. It catalyses the reaction ATP + H2O + 4 H(+)(in) = ADP + phosphate + 5 H(+)(out). Its function is as follows. Produces ATP from ADP in the presence of a proton gradient across the membrane. The alpha chain is a regulatory subunit. The protein is ATP synthase subunit alpha of Cupriavidus metallidurans (strain ATCC 43123 / DSM 2839 / NBRC 102507 / CH34) (Ralstonia metallidurans).